Here is a 271-residue protein sequence, read N- to C-terminus: Tryptophan synthase alpha chain (271 aa).

Active-site proton acceptor residues include glutamate 49 and aspartate 60.

Belongs to the TrpA family. In terms of assembly, tetramer of two alpha and two beta chains.

The enzyme catalyses (1S,2R)-1-C-(indol-3-yl)glycerol 3-phosphate + L-serine = D-glyceraldehyde 3-phosphate + L-tryptophan + H2O. It functions in the pathway amino-acid biosynthesis; L-tryptophan biosynthesis; L-tryptophan from chorismate: step 5/5. Functionally, the alpha subunit is responsible for the aldol cleavage of indoleglycerol phosphate to indole and glyceraldehyde 3-phosphate. In Azoarcus sp. (strain BH72), this protein is Tryptophan synthase alpha chain.